Consider the following 414-residue polypeptide: Serine/threonine transporter SstT (414 aa).

Transmembrane regions (helical) follow at residues 16 to 36 (GSLV…AWIS), 46 to 66 (LGTL…LMLV), 84 to 104 (ILFL…VFSF), 143 to 163 (ALLN…GFAL), 180 to 200 (AVTF…FGLV), 219 to 239 (LVVL…LLVF), 300 to 320 (MAGA…TLGV), and 332 to 352 (VVAS…LLLI).

This sequence belongs to the dicarboxylate/amino acid:cation symporter (DAACS) (TC 2.A.23) family.

The protein resides in the cell inner membrane. It catalyses the reaction L-serine(in) + Na(+)(in) = L-serine(out) + Na(+)(out). It carries out the reaction L-threonine(in) + Na(+)(in) = L-threonine(out) + Na(+)(out). In terms of biological role, involved in the import of serine and threonine into the cell, with the concomitant import of sodium (symport system). In Salmonella schwarzengrund (strain CVM19633), this protein is Serine/threonine transporter SstT.